Here is a 233-residue protein sequence, read N- to C-terminus: Pre-mRNA-splicing factor syf-2 (233 aa).

Residues 1–16 show a composition bias toward polar residues; that stretch reads MSDSEQTSSGTASSGS. Disordered regions lie at residues 1-80 and 95-119; these read MSDS…EDKG and VTEKLEQKRKRKKNPDQGFASYEDM. Residues 17 to 80 are compositionally biased toward basic and acidic residues; the sequence is KMKDFNQRFR…QDRKEAEDKG (64 aa). Positions 18–77 form a coiled coil; sequence MKDFNQRFRDLHKMRQKARKENHAQVVEEDRRKKLPKNFEAKKERDQWQVKELQDRKEAE.

The protein belongs to the SYF2 family. As to quaternary structure, may be part of a spliceosome complex.

Its subcellular location is the nucleus. May be involved in pre-mRNA splicing. The polypeptide is Pre-mRNA-splicing factor syf-2 (Caenorhabditis briggsae).